We begin with the raw amino-acid sequence, 312 residues long: Ribose-phosphate pyrophosphokinase (312 aa).

ATP is bound by residues Asp-34–Glu-36 and Arg-93–Gln-94. His-127 and Asp-168 together coordinate Mg(2+). The active site involves Lys-192. Residues Arg-194, Asp-218, and Asp-222 to Thr-226 each bind D-ribose 5-phosphate.

This sequence belongs to the ribose-phosphate pyrophosphokinase family. Class I subfamily. Homohexamer. Requires Mg(2+) as cofactor.

Its subcellular location is the cytoplasm. It carries out the reaction D-ribose 5-phosphate + ATP = 5-phospho-alpha-D-ribose 1-diphosphate + AMP + H(+). It participates in metabolic intermediate biosynthesis; 5-phospho-alpha-D-ribose 1-diphosphate biosynthesis; 5-phospho-alpha-D-ribose 1-diphosphate from D-ribose 5-phosphate (route I): step 1/1. Functionally, involved in the biosynthesis of the central metabolite phospho-alpha-D-ribosyl-1-pyrophosphate (PRPP) via the transfer of pyrophosphoryl group from ATP to 1-hydroxyl of ribose-5-phosphate (Rib-5-P). This Caulobacter vibrioides (strain ATCC 19089 / CIP 103742 / CB 15) (Caulobacter crescentus) protein is Ribose-phosphate pyrophosphokinase.